The primary structure comprises 655 residues: p-hydroxybenzoic acid efflux pump subunit AaeB (655 aa).

Residues 1 to 12 lie on the Periplasmic side of the membrane; that stretch reads MGIFSIANQHIR. The chain crosses the membrane as a helical span at residues 13 to 33; that stretch reads FAVKLATAIVLALFVGFHFQL. Residues 34–37 lie on the Cytoplasmic side of the membrane; the sequence is ETPR. A helical transmembrane segment spans residues 38–58; the sequence is WAVLTAAIVAAGPAFAAGGEP. At 59-68 the chain is on the periplasmic side; that stretch reads YSGAIRYRGF. A helical transmembrane segment spans residues 69 to 89; sequence LRIIGTFIGCIAGLVIIIAMI. Topologically, residues 90-92 are cytoplasmic; that stretch reads RAP. The helical transmembrane segment at 93–113 threads the bilayer; the sequence is LLMILVCCIWAGFCTWISSLV. Residues 114–120 lie on the Periplasmic side of the membrane; that stretch reads RIENSYA. A helical membrane pass occupies residues 121–141; sequence WGLAGYTALIIVITIQPEPLL. The Cytoplasmic segment spans residues 142–151; that stretch reads TPQFAVERCS. A helical membrane pass occupies residues 152 to 172; that stretch reads EIVIGIVCAIMADLLFSPRSI. Residues 173–369 lie on the Periplasmic side of the membrane; it reads KQEVDRELES…RTTLSCILGT (197 aa). Residues 370–390 form a helical membrane-spanning segment; that stretch reads LFWLWTGWTSGSGAMVMIAVV. Residues 391–406 lie on the Cytoplasmic side of the membrane; that stretch reads TSLAMRLPNPRMVAID. Residues 407–427 traverse the membrane as a helical segment; that stretch reads FIYGTLAALPLGLLYFLVIIP. The Periplasmic segment spans residues 428–430; that stretch reads NTQ. The chain crosses the membrane as a helical span at residues 431-451; sequence QSMLLLCISLAVLGFFLGIEV. The Cytoplasmic portion of the chain corresponds to 452–458; it reads QKRRLGS. The chain crosses the membrane as a helical span at residues 459–479; that stretch reads MGALASTINIIVLDNPMTFHF. Over 480–481 the chain is Periplasmic; the sequence is SQ. Residues 482 to 502 form a helical membrane-spanning segment; it reads FLDSALGQIVGCVLAFTVILL. The Cytoplasmic portion of the chain corresponds to 503–655; it reads VRDKSRDRTG…HKYQHALTDS (153 aa).

The protein belongs to the aromatic acid exporter ArAE (TC 2.A.85) family.

It localises to the cell inner membrane. In terms of biological role, forms an efflux pump with AaeA. Could function as a metabolic relief valve, allowing to eliminate certain compounds when they accumulate to high levels in the cell. The chain is p-hydroxybenzoic acid efflux pump subunit AaeB from Escherichia coli O6:H1 (strain CFT073 / ATCC 700928 / UPEC).